A 628-amino-acid polypeptide reads, in one-letter code: Junctophilin-4 (628 aa).

Topologically, residues 1–606 (MSPGGKFDFD…RPAQPGAANP (606 aa)) are cytoplasmic. MORN repeat units lie at residues 50-72 (LGVF…KREG), 74-95 (GVER…KGRS), 96-117 (GVWE…FQDG), 118-140 (YGTE…KRHG), 141-163 (YGVR…RTSL), and 164-186 (DSGH…EGGS). 2 disordered regions span residues 158 to 214 (PRRT…RTPA) and 231 to 276 (GGRR…LIEG). Positions 170–179 (PPTPPPPLPL) are enriched in pro residues. 2 stretches are compositionally biased toward low complexity: residues 231–241 (GGRRSSLGSKR) and 253–272 (GSTG…APPA). MORN repeat units follow at residues 317-339 (YGRT…RLVH) and 340-362 (GGRV…KVDR). The segment at 415–602 (DLQPMLEAPG…AATERPAQPG (188 aa)) is disordered. Over residues 432–443 (EGSDTEPLDEDS) the composition is skewed to acidic residues. 2 stretches are compositionally biased toward low complexity: residues 453–467 (PSEG…PASS) and 528–541 (GSPL…SSGS). The helical; Anchor for type IV membrane protein transmembrane segment at 607 to 628 (LVVGAVALLDLSLAFLFSQLLT) threads the bilayer.

The protein belongs to the junctophilin family.

The protein resides in the cell membrane. It localises to the endoplasmic reticulum membrane. Its function is as follows. Junctophilins contribute to the formation of junctional membrane complexes (JMCs) which link the plasma membrane with the endoplasmic or sarcoplasmic reticulum in excitable cells. Provides a structural foundation for functional cross-talk between the cell surface and intracellular calcium release channels. JPH4 is brain-specific and appears to have an active role in certain neurons involved in motor coordination and memory. This chain is Junctophilin-4 (JPH4), found in Homo sapiens (Human).